We begin with the raw amino-acid sequence, 493 residues long: Neuronal acetylcholine receptor subunit alpha-6 (493 aa).

Positions 1–30 (MLNGWGRGDLRSGLCLWICGFLAFFKGSRG) are cleaved as a signal peptide. Over 31 to 240 (CVSEEQLFHT…TYSFYIRRLP (210 aa)) the chain is Extracellular. Asn54 and Asn171 each carry an N-linked (GlcNAc...) asparagine glycan. Disulfide bonds link Cys158–Cys172 and Cys222–Cys223. Helical transmembrane passes span 241 to 265 (MFYT…FYLP), 272 to 290 (VTLC…LVIT), and 306 to 327 (YLLF…VLNI). Over 328-464 (HYRTPATHTM…WKYMAMVVDR (137 aa)) the chain is Cytoplasmic. Ser401 is modified (phosphoserine). The chain crosses the membrane as a helical span at residues 465 to 484 (VFLWVFIIVCVFGTVGLFLQ).

It belongs to the ligand-gated ion channel (TC 1.A.9) family. Acetylcholine receptor (TC 1.A.9.1) subfamily. Alpha-6/CHRNA6 sub-subfamily. Neuronal AChR is composed of two different types of subunits: alpha and non-alpha (beta). CHRNA6/alpha-6 subunit can be combined to CHRNB2/beta-2 and CHRNA4/alpha-4 to give rise to functional receptors. Interacts with LYPD6. As to expression, predominantly expressed in only a few brain areas, including dopaminergic neurons, norepirephrine neurons and cells of the visual system.

The protein localises to the synaptic cell membrane. The catalysed reaction is Ca(2+)(in) = Ca(2+)(out). The enzyme catalyses K(+)(in) = K(+)(out). It catalyses the reaction Na(+)(in) = Na(+)(out). Its activity is regulated as follows. Activated by a myriad of ligands such as acetylcholine, cytisine and nicotine. CHRNA6 nAChR activity is inhibited by the antagonists alpha-conotoxin MII and PIA, a small disulfide-constrained peptides from cone snails. Component of neuronal acetylcholine receptors (nAChRs) that function as pentameric, ligand-gated cation channels with high calcium permeability among other activities. nAChRs are excitatory neurotrasnmitter receptors formed by a collection of nAChR subunits known to mediate synaptic transmission in the nervous system and the neuromuscular junction. Each nAchR subunit confers differential attributes to channel properties, including activation, deactivation and desensitization kinetics, pH sensitivity, cation permeability, and binding to allosteric modulators. CHRNA6 forms pentameric channels with CHRNB2 and CHRNA4 that exhibit high sensitivity to ACh and nicotine and are predominantly expressed in only a few brain areas, including dopaminergic neurons, norepirephrine neurons and cells of the visual system. nAChrs containing CHRNA6 subunits mediate endogenous cholinergic modulation of dopamine and gamma-aminobutyric acid (GABA) release in response to nicotine at nerve terminals. The sequence is that of Neuronal acetylcholine receptor subunit alpha-6 (Chrna6) from Rattus norvegicus (Rat).